The sequence spans 445 residues: Xylose isomerase (445 aa).

Catalysis depends on residues H99 and D102. Mg(2+) contacts are provided by E230, E266, H269, D294, D305, D307, and D337.

The protein belongs to the xylose isomerase family. As to quaternary structure, homotetramer. Mg(2+) serves as cofactor.

It is found in the cytoplasm. It carries out the reaction alpha-D-xylose = alpha-D-xylulofuranose. This is Xylose isomerase from Geobacillus kaustophilus (strain HTA426).